Reading from the N-terminus, the 489-residue chain is CUGBP Elav-like family member 1-B (489 aa).

RRM domains are found at residues 16–99 (IKMF…PADS), 108–188 (RKLF…FADT), and 404–482 (ANLF…LKRS).

Belongs to the CELF/BRUNOL family. As to quaternary structure, oligomer. Oligomerization is required for RNA-binding and EDEN-dependent deadenylation. Phosphorylated during oocyte maturation and dephosphorylated following egg activation. Dephosphorylation is calcium dependent and correlates with the increase in the activity of EDEN-dependent deadenylation.

Its subcellular location is the nucleus. It is found in the cytoplasm. In terms of biological role, RNA-binding protein implicated in the regulation of several post-transcriptional events. May be involved in pre-mRNA alternative splicing, mRNA translation activation and stability. Mediates the rapid and sequence-specific cytoplasmic deadenylation of EDEN-containing maternal mRNAs following fertilization. Binds to AU-rich sequences (AREs) of jun mRNA. Binds to the embryonic deadenylation element (EDEN) motif localized in the 3'-UTR of maternal mRNAs. Binds to RNA containing several repeats of the consensus sequence 5'-UGU-3'. EDEN-dependent deadenylation is enhanced by the presence of an additional cis element composed of three AUU repeats. The protein is CUGBP Elav-like family member 1-B (cugbp1-b) of Xenopus laevis (African clawed frog).